An 848-amino-acid chain; its full sequence is Trimethylamine-N-oxide reductase 1 (848 aa).

A signal peptide (tat-type signal) is located at residues 1–39; the sequence is MNNNDLFQASRRRFLAQLGGLTVAGMLGPSLLTPRRATA. A Mo-bis(molybdopterin guanine dinucleotide)-binding site is contributed by Ser-191.

The protein belongs to the prokaryotic molybdopterin-containing oxidoreductase family. As to quaternary structure, interacts with the N-terminal domain of TorC. The cofactor is Mo-bis(molybdopterin guanine dinucleotide). Post-translationally, exported by the Tat system. The position of the signal peptide cleavage has been experimentally proven.

It is found in the periplasm. It carries out the reaction trimethylamine + 2 Fe(III)-[cytochrome c] + H2O = trimethylamine N-oxide + 2 Fe(II)-[cytochrome c] + 3 H(+). Reduces trimethylamine-N-oxide (TMAO) into trimethylamine; an anaerobic reaction coupled to energy-yielding reactions. In Escherichia coli (strain K12), this protein is Trimethylamine-N-oxide reductase 1 (torA).